The sequence spans 276 residues: Large ribosomal subunit protein uL2 (276 aa).

A disordered region spans residues G223–K276. Residues D230 to A240 show a composition bias toward basic and acidic residues. A compositionally biased stretch (basic residues) spans L257–K276.

Belongs to the universal ribosomal protein uL2 family. As to quaternary structure, part of the 50S ribosomal subunit. Forms a bridge to the 30S subunit in the 70S ribosome.

Its function is as follows. One of the primary rRNA binding proteins. Required for association of the 30S and 50S subunits to form the 70S ribosome, for tRNA binding and peptide bond formation. It has been suggested to have peptidyltransferase activity; this is somewhat controversial. Makes several contacts with the 16S rRNA in the 70S ribosome. This is Large ribosomal subunit protein uL2 from Thermus thermophilus (strain ATCC BAA-163 / DSM 7039 / HB27).